Here is a 556-residue protein sequence, read N- to C-terminus: Sphingomyelinase C (556 aa).

Positions 1–27 (MRIKKYTKVRLLVNCCLLLFFLIDCGA) are cleaved as a signal peptide.

Its subcellular location is the secreted. It carries out the reaction a sphingomyelin + H2O = phosphocholine + an N-acylsphing-4-enine + H(+). The chain is Sphingomyelinase C (sph) from Leptospira interrogans.